The chain runs to 423 residues: Steroid hormone receptor ERR1 (423 aa).

The interval 1-67 is disordered; it reads MSSQVVGIEP…GAGPGEQGGG (67 aa). Residues 1–76 are repressor domain; the sequence is MSSQVVGIEP…GKLVLSSLPK (76 aa). K14 is covalently cross-linked (Glycyl lysine isopeptide (Lys-Gly) (interchain with G-Cter in SUMO)). S19 and S22 each carry phosphoserine. Residues 58-67 show a composition bias toward gly residues; the sequence is GAGPGEQGGG. The segment at residues 76–151 is a DNA-binding region (nuclear receptor); that stretch reads KRLCLVCGDV…VGMLKEGVRL (76 aa). 2 consecutive NR C4-type zinc fingers follow at residues 79-99 and 115-134; these read CLVC…CEAC and CPAS…CQAC. An N6-acetyllysine; by PCAF/KAT2B mark is found at K129, K138, K160, and K162. A Glycyl lysine isopeptide (Lys-Gly) (interchain with G-Cter in SUMO2) cross-link involves residue K189. In terms of domain architecture, NR LBD spans 193-421; sequence PVNALVSHLL…KLFLEMLEAM (229 aa). K403 is covalently cross-linked (Glycyl lysine isopeptide (Lys-Gly) (interchain with G-Cter in SUMO); alternate). Residue K403 forms a Glycyl lysine isopeptide (Lys-Gly) (interchain with G-Cter in SUMO2); alternate linkage. The segment at 403-423 is AF-2 domain; that stretch reads KLEGKVPMHKLFLEMLEAMMD.

It belongs to the nuclear hormone receptor family. NR3 subfamily. Binds DNA as a monomer or a homodimer. Interacts (via the AF2 domain) with coactivator PPARGC1A (via the L3 motif); the interaction greatly enhances transcriptional activity of genes involved in energy metabolism. Interacts with PIAS4; the interaction enhances sumoylation. Interacts with MAPK15; promotes re-localization of ESRRA to the cytoplasm through a XPO1-dependent mechanism then inhibits ESRRA transcriptional activity. Phosphorylation on Ser-19 enhances sumoylation on Lys-14 increasing repression of transcriptional activity. Post-translationally, sumoylated with SUMO2. Main site is Lys-14 which is enhanced by phosphorylation on Ser-19, cofactor activation, and by interaction with PIAS4. Sumoylation enhances repression of transcriptional activity, but has no effect on subcellular location nor on DNA binding. In terms of processing, reversibly acetylated. Acetylation by PCAF/KAT2 at Lys-129, Lys-138, Lys-160 and Lys-162 and PCAF/KAT2 decreases transcriptional activity probably by inhibiting DNA-binding activity; deacetylation involves SIRT1 and HDAC8 and increases DNA-binding.

The protein localises to the nucleus. It is found in the cytoplasm. In terms of biological role, binds to an ERR-alpha response element (ERRE) containing a single consensus half-site, 5'-TNAAGGTCA-3'. Can bind to the medium-chain acyl coenzyme A dehydrogenase (MCAD) response element NRRE-1 and may act as an important regulator of MCAD promoter. Binds to the C1 region of the lactoferrin gene promoter. Requires dimerization and the coactivator, PGC-1A, for full activity. The ERRalpha/PGC1alpha complex is a regulator of energy metabolism. Induces the expression of PERM1 in the skeletal muscle. This is Steroid hormone receptor ERR1 (ESRRA) from Homo sapiens (Human).